Here is a 31-residue protein sequence, read N- to C-terminus: Nemertide alpha-2 (31 aa).

Intrachain disulfides connect C2–C16, C9–C20, and C15–C26. 2 positions are modified to 4-hydroxyproline: P28 and P29.

Belongs to the nemertide family. As to expression, confined to the epidermis and to the mucus layer.

Its subcellular location is the secreted. Functionally, toxin with similar potency against both insect and mammalian sodium channels (Nav). Delays the inactivation of most Nav channels tested (B.germanica (BgNav1); EC(50)=87.2 nM, human Nav1.1/SCN1A; EC(50)=125.8 nM, rat Nav1.2/SCN2A; EC(50)=97.9 nM, rat Nav1.3/SCN3A; EC(50)=127.7 nM, rat Nav1.4/SCN4A; EC(50)=1150.3 nM, human Nav1.5/SCN5A; EC(50)=149.2 nM, mouse Nav1.6/SCN8A; EC(50)=1361.8 nM, human Nav1.9/SCN9A; EC(50)=1296.7 nM). Inactivation is completely prevented by a concentration of 1 uM, resulting in sustained, non-inactivating current. In addition, the toxin significantly enhances the recovery from inactivation, and the open state is not required for the toxin to interact with the channel. In vivo, injection into brine shrimp (Artemia salina) stops movement or causes death after 24 hours (EC(50)=2.9 uM). The polypeptide is Nemertide alpha-2 (Lineus longissimus (Bootlace worm)).